A 119-amino-acid chain; its full sequence is V-type proton ATPase subunit F (119 aa).

Belongs to the V-ATPase F subunit family. As to quaternary structure, V-ATPase is a heteromultimeric enzyme composed of a peripheral catalytic V1 complex (components A to H) attached to an integral membrane V0 proton pore complex (components: a, c, c', c'', d, e, f and VOA1).

It is found in the vacuole membrane. In terms of biological role, subunit of the V1 complex of vacuolar(H+)-ATPase (V-ATPase), a multisubunit enzyme composed of a peripheral complex (V1) that hydrolyzes ATP and a membrane integral complex (V0) that translocates protons. V-ATPase is responsible for acidifying and maintaining the pH of intracellular compartments. This Vanderwaltozyma polyspora (strain ATCC 22028 / DSM 70294 / BCRC 21397 / CBS 2163 / NBRC 10782 / NRRL Y-8283 / UCD 57-17) (Kluyveromyces polysporus) protein is V-type proton ATPase subunit F (VMA7).